The sequence spans 378 residues: MATTASNHYNILTSSPSIVHSEPGSMQQATAYRDAQTLLQSDYSLQSNSHPLSHAHQWITALSHGEGGPWSSSPLGEQDIKPAVQSPRDEMHNSSNLQHQSRPPHLVHQTHGNHHDSRAWRTTTAAHIPSMATSNGQSLIYSQPSFSVNGLIPGSGQGIHHHSMRDAHEDHHSPHLSDHGHPPSQHQHQSHQSHHDHSDEDTPTSDDLEQFAKQFKQRRIKLGFTQADVGLALGTLYGNVFSQTTICRFEALQLSFKNMCKLKPLLNKWLEEADSTSGSPTSLDKIAAQGRKRKKRTSIEVSVKGALESHFLKCPKPAASEITSLADSLQLEKEVVRVWFCNRRQKEKRMTPPGGPLPGTEDVYGDTPPHHGVQTPVQ.

Disordered regions lie at residues 1 to 28, 86 to 118, and 151 to 205; these read MATT…SMQQ, SPRD…HDSR, and LIPG…TPTS. Basic and acidic residues predominate over residues 164 to 181; the sequence is MRDAHEDHHSPHLSDHGH. The POU-specific domain maps to 200–274; it reads EDTPTSDDLE…LLNKWLEEAD (75 aa). Position 279 is a phosphoserine (Ser-279). The homeobox DNA-binding region spans 292–351; sequence KRKKRTSIEVSVKGALESHFLKCPKPAASEITSLADSLQLEKEVVRVWFCNRRQKEKRMT. A disordered region spans residues 347–378; the sequence is EKRMTPPGGPLPGTEDVYGDTPPHHGVQTPVQ.

The protein belongs to the POU transcription factor family. Class-3 subfamily. As to expression, predominantly expressed in the central nervous system, with strong expression in the cerebellum.

It is found in the nucleus. In terms of biological role, transcription factor that may play important roles in patterning the embryonic brain. The sequence is that of POU domain, class 3, transcription factor 2 (pou3f2) from Danio rerio (Zebrafish).